The following is a 204-amino-acid chain: Ribosome maturation factor RimM (204 aa).

Positions 117–192 constitute a PRC barrel domain; the sequence is DEDEFFSADL…EVTIDPPDDL (76 aa).

Belongs to the RimM family. Binds ribosomal protein uS19.

The protein resides in the cytoplasm. An accessory protein needed during the final step in the assembly of 30S ribosomal subunit, possibly for assembly of the head region. Essential for efficient processing of 16S rRNA. May be needed both before and after RbfA during the maturation of 16S rRNA. It has affinity for free ribosomal 30S subunits but not for 70S ribosomes. The sequence is that of Ribosome maturation factor RimM from Methylobacterium nodulans (strain LMG 21967 / CNCM I-2342 / ORS 2060).